Consider the following 213-residue polypeptide: Amelogenin, X isoform (213 aa).

The first 16 residues, 1–16, serve as a signal peptide directing secretion; that stretch reads MGTWILFACLLGAAFS. A Phosphoserine modification is found at S32. 2 stretches are compositionally biased toward low complexity: residues 96 to 105 and 114 to 160; these read VPQQPMMPVP and QHHQ…QPLQ. Residues 96–213 form a disordered region; that stretch reads VPQQPMMPVP…TDKTKREEVD (118 aa). The span at 161 to 194 shows a compositional bias: pro residues; it reads PLQPQPPVHPIQPLPPQPPLPPIFPMQPLPPMLP.

Belongs to the amelogenin family. Interacts with KRT5. In terms of processing, phosphorylated by FAM20C in vitro.

The protein localises to the secreted. Its subcellular location is the extracellular space. It localises to the extracellular matrix. Functionally, plays a role in the biomineralization of teeth. Seems to regulate the formation of crystallites during the secretory stage of tooth enamel development. Thought to play a major role in the structural organization and mineralization of developing enamel. The polypeptide is Amelogenin, X isoform (AMELX) (Bos taurus (Bovine)).